Consider the following 453-residue polypeptide: Na(+)/H(+) antiporter NhaA (453 aa).

Transmembrane regions (helical) follow at residues 27 to 47 (FLHI…SALI), 78 to 98 (LHFW…GMEI), 114 to 134 (ILPI…YFIF), 143 to 163 (GWAV…ALLG), 172 to 192 (IILL…IAFF), 201 to 221 (GLLI…IGLA), 222 to 242 (SAWL…VTGV), 316 to 336 (PWVA…VSFA), 346 to 366 (FLIV…GIIT), 385 to 405 (WAGI…SIFV), and 421 to 441 (IGVL…GFIY).

It belongs to the NhaA Na(+)/H(+) (TC 2.A.33) antiporter family.

Its subcellular location is the cell inner membrane. The catalysed reaction is Na(+)(in) + 2 H(+)(out) = Na(+)(out) + 2 H(+)(in). Functionally, na(+)/H(+) antiporter that extrudes sodium in exchange for external protons. The chain is Na(+)/H(+) antiporter NhaA from Bartonella tribocorum (strain CIP 105476 / IBS 506).